The following is a 529-amino-acid chain: Variant surface glycoprotein MITAT 1.6 (529 aa).

The N-terminal stretch at 1-24 (MAVHRALAAYAISLYVLLPRKSGA) is a signal peptide. 2 cysteine pairs are disulfide-bonded: Cys-39/Cys-170 and Cys-147/Cys-214. The N-linked (GlcNAc...) (high mannose) asparagine glycan is linked to Asn-456. Residue Asp-506 is the site of GPI-anchor amidated aspartate attachment. The propeptide at 507 to 529 (SSILVTKKFALTVVSAAFVALLF) is removed in mature form.

N-glycosylated; glycan is composed of 6 to 9 mannose residues.

The protein resides in the cell membrane. Its function is as follows. VSG forms a coat on the surface of the parasite. The trypanosome evades the immune response of the host by expressing a series of antigenically distinct VSGs from an estimated 1000 VSG genes. In Trypanosoma brucei brucei, this protein is Variant surface glycoprotein MITAT 1.6.